A 275-amino-acid chain; its full sequence is MAVIKCKPTSAGRRHVVKVVNSDLHKGKPFAGLLAKKAKSGGRNNTGRITVRHVGGGHKQHYRIVDFKRNKDGIPAKVERLEYDPNRTANIALVLYADGERRYILAAKGMQAGDQIQSGIDAEIKAGNALPLRNIPVGSVVHAVEMKPGKGAQIARSAGTYVQVVARDGAYATLRLRSGEMRKVPVDCRATLGEVGNAEHMLRQLGKAGAKRWRGVRPTVRGVAMNPVDHPHGGGEGRTSGGRHPVTPWGVPTKGYKTRSNKRTDKYIVRRRNKK.

The interval 223 to 275 is disordered; that stretch reads VAMNPVDHPHGGGEGRTSGGRHPVTPWGVPTKGYKTRSNKRTDKYIVRRRNKK.

It belongs to the universal ribosomal protein uL2 family. In terms of assembly, part of the 50S ribosomal subunit. Forms a bridge to the 30S subunit in the 70S ribosome.

Functionally, one of the primary rRNA binding proteins. Required for association of the 30S and 50S subunits to form the 70S ribosome, for tRNA binding and peptide bond formation. It has been suggested to have peptidyltransferase activity; this is somewhat controversial. Makes several contacts with the 16S rRNA in the 70S ribosome. The chain is Large ribosomal subunit protein uL2 from Shewanella loihica (strain ATCC BAA-1088 / PV-4).